The chain runs to 312 residues: Methionyl-tRNA formyltransferase (312 aa).

Position 110-113 (110-113 (SLLP)) interacts with (6S)-5,6,7,8-tetrahydrofolate.

It belongs to the Fmt family.

It carries out the reaction L-methionyl-tRNA(fMet) + (6R)-10-formyltetrahydrofolate = N-formyl-L-methionyl-tRNA(fMet) + (6S)-5,6,7,8-tetrahydrofolate + H(+). Functionally, attaches a formyl group to the free amino group of methionyl-tRNA(fMet). The formyl group appears to play a dual role in the initiator identity of N-formylmethionyl-tRNA by promoting its recognition by IF2 and preventing the misappropriation of this tRNA by the elongation apparatus. In Koribacter versatilis (strain Ellin345), this protein is Methionyl-tRNA formyltransferase.